A 185-amino-acid chain; its full sequence is Ribosome-recycling factor (185 aa).

This sequence belongs to the RRF family.

Its subcellular location is the cytoplasm. Functionally, responsible for the release of ribosomes from messenger RNA at the termination of protein biosynthesis. May increase the efficiency of translation by recycling ribosomes from one round of translation to another. The polypeptide is Ribosome-recycling factor (Wolbachia pipientis wMel).